Here is a 212-residue protein sequence, read N- to C-terminus: MPGSSLWLIPPPSHPLYPILSFLISQHLPSDFPSEAGAADARLIPEFFAPHMTLSSGISPDLYGDDPQRWLDSIPWPSADEVQVRFEGISSQDTYYRRCYARVKLDEGIKKIAGLARARGVNGEDDAKGAKTQEWLEWWRKEFGPHVSLMYGDVPISDDRLKEVAKVVEEAGVKLAEPEGNVEGNGWNGGVVWLVPTDRDIRDWKPIAKRVL.

The Proton donor/acceptor role is filled by His-51. Thr-53 lines the substrate pocket. Catalysis depends on His-146, which acts as the Proton donor/acceptor. Positions 148 and 151 each coordinate substrate.

Belongs to the 2H phosphoesterase superfamily. CPD1 family.

It is found in the golgi apparatus. It catalyses the reaction a nucleoside 2',3'-cyclic phosphate + H2O = a nucleoside 2'-phosphate + H(+). Involved in the metabolism of ADP-ribose 1',2'-cyclic phosphate which is produced as a consequence of tRNA splicing. In Neurospora crassa (strain ATCC 24698 / 74-OR23-1A / CBS 708.71 / DSM 1257 / FGSC 987), this protein is 2',3'-cyclic-nucleotide 3'-phosphodiesterase (cpd-7).